The sequence spans 276 residues: E3 ubiquitin-protein ligase CCNB1IP1 (276 aa).

Residues 10–52 form an RING-type; atypical zinc finger; it reads CNYRKCRIKLSGYAWVTACSHIFCDQHGSGEFSRSPAICPACN. Positions 146–182 form a coiled coil; that stretch reads MKKVLEEYKKKFSDISEKLMERNRQYQKLQGLYDSLR.

Interacts with CCNB1, UBE2L3 and NF2. Ubiquitinated; autoubiquitinated. In terms of processing, phosphorylated by CDK1 on serine or threonine residues (in vitro). In terms of tissue distribution, expressed predominantly in the testes and 17 day embryos (corresponding to prophase I in females). Weakly or not expressed in other tissues.

The protein resides in the nucleus. The protein localises to the chromosome. The enzyme catalyses S-ubiquitinyl-[E2 ubiquitin-conjugating enzyme]-L-cysteine + [acceptor protein]-L-lysine = [E2 ubiquitin-conjugating enzyme]-L-cysteine + N(6)-ubiquitinyl-[acceptor protein]-L-lysine.. The protein operates within protein modification; protein ubiquitination. Ubiquitin E3 ligase that acts as a limiting factor for crossing-over during meiosis: required during zygonema to limit the colocalization of RNF212 with MutS-gamma-associated recombination sites and thereby establish early differentiation of crossover and non-crossover sites. Later, it is directed by MutL-gamma to stably accumulate at designated crossover sites. Probably promotes the dissociation of RNF212 and MutS-gamma to allow the progression of recombination and the implementation of the final steps of crossing over. Modulates cyclin-B levels and participates in the regulation of cell cycle progression through the G2 phase. Overexpression causes delayed entry into mitosis. The protein is E3 ubiquitin-protein ligase CCNB1IP1 (Ccnb1ip1) of Mus musculus (Mouse).